Consider the following 445-residue polypeptide: UPF0210 protein SPH_0352 (445 aa).

It belongs to the UPF0210 family. As to quaternary structure, homodimer.

The polypeptide is UPF0210 protein SPH_0352 (Streptococcus pneumoniae (strain Hungary19A-6)).